The following is a 58-amino-acid chain: Conotoxin Im5.4 (58 aa).

The signal sequence occupies residues 1-18; that stretch reads MRCLPVVVFLLLLLSAAA. The propeptide occupies 19-28; sequence APGVGSKTER.

It belongs to the conotoxin T superfamily. In terms of processing, contains 2 disulfide bonds that can be either 'C1-C3, C2-C4' or 'C1-C4, C2-C3', since these disulfide connectivities have been observed for conotoxins with cysteine framework V (for examples, see AC P0DQQ7 and AC P81755). Expressed by the venom duct.

The protein localises to the secreted. In terms of biological role, probable neurotoxin. The protein is Conotoxin Im5.4 of Conus imperialis (Imperial cone).